Reading from the N-terminus, the 447-residue chain is Argininosuccinate synthase (447 aa).

ATP contacts are provided by residues 17–25 and Ala-43; that span reads AFSGGLDTS. Tyr-99 contributes to the L-citrulline binding site. Residues Gly-129 and Thr-131 each contribute to the ATP site. L-aspartate-binding residues include Thr-131, Asn-135, and Asp-136. Position 135 (Asn-135) interacts with L-citrulline. Asp-136 contributes to the ATP binding site. L-citrulline-binding residues include Arg-139 and Ser-192. Residue Asp-194 participates in ATP binding. Residues Thr-201, Glu-203, and Glu-280 each coordinate L-citrulline.

The protein belongs to the argininosuccinate synthase family. Type 2 subfamily. As to quaternary structure, homotetramer.

It localises to the cytoplasm. The catalysed reaction is L-citrulline + L-aspartate + ATP = 2-(N(omega)-L-arginino)succinate + AMP + diphosphate + H(+). The protein operates within amino-acid biosynthesis; L-arginine biosynthesis; L-arginine from L-ornithine and carbamoyl phosphate: step 2/3. The protein is Argininosuccinate synthase of Salmonella newport (strain SL254).